A 321-amino-acid chain; its full sequence is MPRDTNNRHRSTPYERPTLEDLRRQLQDNLDSINRRDRMQEEQEENLRYQVRRRQRQNQLRSIQMEQQRMMAELNNEPVINFKFECSVCLETYSQQSNDTCPFLIPTTCDHGFCFKCVINLQSNAMNIPHSTVCCPLCNTQVKMWRSLKPNAVVTCKFYKKTQERVPPVQQYKNIIKVLQERSVISVEDNDNNCDINMENQAKIAALEAELEEEKNHSDQVASENRQLIEENTRLNEQIQELQHQVRTLVPQRGITVNQQIGRDDSAPAELNERFRSLVYSTISELFIENGVHSIQNYVYAGTSAASSCDVNVTVNFGFEN.

An RING-type zinc finger spans residues 86–139 (CSVCLETYSQQSNDTCPFLIPTTCDHGFCFKCVINLQSNAMNIPHSTVCCPLCN). The interval 228–249 (LIEENTRLNEQIQELQHQVRTL) is leucine-zipper.

The protein resides in the host nucleus. In terms of biological role, plays some regulatory role in both viral DNA replication and transcriptional transactivation. This chain is Major immediate early protein (PE38), found in Lepidoptera (butterflies and moths).